Consider the following 326-residue polypeptide: N-acetyl-gamma-glutamyl-phosphate reductase (326 aa).

Cysteine 155 is a catalytic residue.

Belongs to the NAGSA dehydrogenase family. Type 1 subfamily.

It is found in the cytoplasm. The enzyme catalyses N-acetyl-L-glutamate 5-semialdehyde + phosphate + NADP(+) = N-acetyl-L-glutamyl 5-phosphate + NADPH + H(+). Its pathway is amino-acid biosynthesis; L-arginine biosynthesis; N(2)-acetyl-L-ornithine from L-glutamate: step 3/4. In terms of biological role, catalyzes the NADPH-dependent reduction of N-acetyl-5-glutamyl phosphate to yield N-acetyl-L-glutamate 5-semialdehyde. This Shewanella baltica (strain OS155 / ATCC BAA-1091) protein is N-acetyl-gamma-glutamyl-phosphate reductase.